The following is a 151-amino-acid chain: UPF0208 membrane protein ESA_00924 (151 aa).

2 helical membrane-spanning segments follow: residues 46–65 (FAIR…QIAL) and 69–91 (LGPA…WWLG).

The protein belongs to the UPF0208 family.

It is found in the cell inner membrane. The sequence is that of UPF0208 membrane protein ESA_00924 from Cronobacter sakazakii (strain ATCC BAA-894) (Enterobacter sakazakii).